A 325-amino-acid chain; its full sequence is Melanocortin receptor 5 (325 aa).

Over 1 to 37 (MNSSFHLHFLDLGLNATEGNLSGLSVRNASSPCEDMG) the chain is Extracellular. Asn2, Asn15, Asn20, and Asn28 each carry an N-linked (GlcNAc...) asparagine glycan. Residues 38–61 (IAVEVFLALGLISLLENILVIGAI) form a helical membrane-spanning segment. Residues 62–73 (VRNRNLHIPMYF) are Cytoplasmic-facing. The chain crosses the membrane as a helical span at residues 74 to 97 (FVGSLAVADMLVSLSNFWETITIY). The Extracellular portion of the chain corresponds to 98–114 (LLTNKHLVMADASVRHL). The helical transmembrane segment at 115–138 (DNVFDSMICISVVASMCSLLAIAV) threads the bilayer. Residues 139–155 (DRYVTIFCRLRYQRIMT) are Cytoplasmic-facing. Residues 156 to 179 (GRRSGAIIAGIWAFCTSCGTVFIV) traverse the membrane as a helical segment. Residues 180 to 186 (YYESTYV) are Extracellular-facing. The chain crosses the membrane as a helical span at residues 187-211 (VVCLIAMFLTMLLLMASLYTHMFLL). Topologically, residues 212 to 239 (ARTHVRRIAALPGHSSVRQRTGVKGAIT) are cytoplasmic. The chain crosses the membrane as a helical span at residues 240–265 (LAMLLGVFIICWAPFFLHLILMISCP). Residues 266-273 (QNLYCSCF) lie on the Extracellular side of the membrane. The chain crosses the membrane as a helical span at residues 274–297 (MSHFNMYLILIMCNSVIDPLIYAF). At 298–325 (RSQEMRKTFKEIVCFQGFRTPCRFPSTY) the chain is on the cytoplasmic side. The S-palmitoyl cysteine moiety is linked to residue Cys311.

It belongs to the G-protein coupled receptor 1 family.

It is found in the cell membrane. Receptor for MSH (alpha, beta and gamma) and ACTH. The activity of this receptor is mediated by G proteins which activate adenylate cyclase. This receptor is a possible mediator of the immunomodulation properties of melanocortins. In Ovis aries (Sheep), this protein is Melanocortin receptor 5 (MC5R).